A 197-amino-acid polypeptide reads, in one-letter code: Imidazoleglycerol-phosphate dehydratase (197 aa).

It belongs to the imidazoleglycerol-phosphate dehydratase family.

The protein localises to the cytoplasm. The catalysed reaction is D-erythro-1-(imidazol-4-yl)glycerol 3-phosphate = 3-(imidazol-4-yl)-2-oxopropyl phosphate + H2O. It participates in amino-acid biosynthesis; L-histidine biosynthesis; L-histidine from 5-phospho-alpha-D-ribose 1-diphosphate: step 6/9. This Pseudomonas fluorescens (strain ATCC BAA-477 / NRRL B-23932 / Pf-5) protein is Imidazoleglycerol-phosphate dehydratase.